We begin with the raw amino-acid sequence, 69 residues long: MSQNNNETMIADIRKKLNIVNQGLLNPDKFKNANQQDIEEIHNFVMSKDSFSPSEVTAIADELGNLRQD.

It belongs to the UPF0435 family.

This Staphylococcus haemolyticus (strain JCSC1435) protein is UPF0435 protein SH1076.